We begin with the raw amino-acid sequence, 180 residues long: MNPAPNLVMIGPMGAGKSSIGRRIAKHFNLHFADTDHAIVERAGTSISTIFKYSGEPEFRRLEREVLHDLLNHENRLIATGGGTILDPENRHRMQKRGFVVFLKINVNTQLERLAHDRYRPLLQQTDRKQVLSDLYATRQPLYQKIADMIVTTDHMSPNTATAQLILDLTAHWQKSSNTA.

14–19 (GAGKSS) serves as a coordination point for ATP. Mg(2+) is bound at residue serine 18. Substrate-binding residues include aspartate 36, arginine 60, and glycine 82. An ATP-binding site is contributed by arginine 120. Arginine 139 is a substrate binding site.

Belongs to the shikimate kinase family. As to quaternary structure, monomer. Mg(2+) is required as a cofactor.

It is found in the cytoplasm. It catalyses the reaction shikimate + ATP = 3-phosphoshikimate + ADP + H(+). It functions in the pathway metabolic intermediate biosynthesis; chorismate biosynthesis; chorismate from D-erythrose 4-phosphate and phosphoenolpyruvate: step 5/7. In terms of biological role, catalyzes the specific phosphorylation of the 3-hydroxyl group of shikimic acid using ATP as a cosubstrate. The sequence is that of Shikimate kinase from Xylella fastidiosa (strain M12).